The primary structure comprises 155 residues: Regulatory protein RecX (155 aa).

Belongs to the RecX family.

It is found in the cytoplasm. Its function is as follows. Modulates RecA activity. The protein is Regulatory protein RecX of Vibrio parahaemolyticus serotype O3:K6 (strain RIMD 2210633).